Reading from the N-terminus, the 189-residue chain is NADH-ubiquinone oxidoreductase 20.9 kDa subunit (189 aa).

A helical membrane pass occupies residues 73–88; that stretch reads AMRLATAVGFFGGFLY.

In terms of assembly, complex I is composed of about 40 different subunits. The N-terminus is blocked.

The protein resides in the mitochondrion inner membrane. It catalyses the reaction a ubiquinone + NADH + 5 H(+)(in) = a ubiquinol + NAD(+) + 4 H(+)(out). In terms of biological role, transfer of electrons from NADH to the respiratory chain. The immediate electron acceptor for the enzyme is believed to be ubiquinone. This is NADH-ubiquinone oxidoreductase 20.9 kDa subunit (nuo20.9) from Neurospora crassa (strain ATCC 24698 / 74-OR23-1A / CBS 708.71 / DSM 1257 / FGSC 987).